Consider the following 466-residue polypeptide: Ribulose bisphosphate carboxylase large chain (466 aa).

Residue K5 is modified to N6,N6,N6-trimethyllysine. Substrate-binding residues include N114 and T164. K166 serves as the catalytic Proton acceptor. K168 serves as a coordination point for substrate. Residues K192, D194, and E195 each contribute to the Mg(2+) site. Residue K192 is modified to N6-carboxylysine. H285 (proton acceptor) is an active-site residue. Substrate-binding residues include R286, H318, and S370.

This sequence belongs to the RuBisCO large chain family. Type I subfamily. Heterohexadecamer of 8 large chains and 8 small chains. Mg(2+) serves as cofactor.

The protein resides in the plastid. It is found in the chloroplast. It catalyses the reaction 2 (2R)-3-phosphoglycerate + 2 H(+) = D-ribulose 1,5-bisphosphate + CO2 + H2O. The catalysed reaction is D-ribulose 1,5-bisphosphate + O2 = 2-phosphoglycolate + (2R)-3-phosphoglycerate + 2 H(+). RuBisCO catalyzes two reactions: the carboxylation of D-ribulose 1,5-bisphosphate, the primary event in carbon dioxide fixation, as well as the oxidative fragmentation of the pentose substrate in the photorespiration process. Both reactions occur simultaneously and in competition at the same active site. The polypeptide is Ribulose bisphosphate carboxylase large chain (Drosera regia (King sundew)).